Reading from the N-terminus, the 610-residue chain is DNA mismatch repair protein MutL (610 aa).

This sequence belongs to the DNA mismatch repair MutL/HexB family.

Functionally, this protein is involved in the repair of mismatches in DNA. It is required for dam-dependent methyl-directed DNA mismatch repair. May act as a 'molecular matchmaker', a protein that promotes the formation of a stable complex between two or more DNA-binding proteins in an ATP-dependent manner without itself being part of a final effector complex. This is DNA mismatch repair protein MutL from Rickettsia conorii (strain ATCC VR-613 / Malish 7).